The following is a 248-amino-acid chain: Probable transcriptional regulatory protein Mpop_0922 (248 aa).

Belongs to the TACO1 family.

The protein resides in the cytoplasm. This chain is Probable transcriptional regulatory protein Mpop_0922, found in Methylorubrum populi (strain ATCC BAA-705 / NCIMB 13946 / BJ001) (Methylobacterium populi).